Here is a 764-residue protein sequence, read N- to C-terminus: FHF complex subunit HOOK interacting protein 2A (764 aa).

The disordered stretch occupies residues 190–236 (SEDGPKGQDPGSGDVSQCQQPQELSGATGVEPTESEEEPPHQMDDLS). Over residues 203-214 (DVSQCQQPQELS) the composition is skewed to polar residues.

This sequence belongs to the FHIP family.

Functionally, may be required for proper functioning of the nervous system. The polypeptide is FHF complex subunit HOOK interacting protein 2A (Mus musculus (Mouse)).